A 339-amino-acid polypeptide reads, in one-letter code: Protein H339R (339 aa).

The protein belongs to the asfivirus H339R family. As to quaternary structure, interacts with NACA (alpha chain of nascent polypeptide-associated complex).

It localises to the host cytoplasm. The protein resides in the host nucleus. The protein localises to the virion. In African swine fever virus (strain Badajoz 1971 Vero-adapted) (Ba71V), this protein is Protein H339R.